The primary structure comprises 1279 residues: ATP-dependent helicase/nuclease subunit A (1279 aa).

The UvrD-like helicase ATP-binding domain occupies 4–499 (TKWTDEQRQA…VKLFKNFRSR (496 aa)). ATP is bound at residue 25–32 (AGAGAGKT). The UvrD-like helicase C-terminal domain maps to 526–853 (EEALKVGASY…RIMSIHKSKG (328 aa)).

The protein belongs to the helicase family. AddA subfamily. In terms of assembly, heterodimer of AddA and AddB/RexB. Mg(2+) serves as cofactor.

The catalysed reaction is Couples ATP hydrolysis with the unwinding of duplex DNA by translocating in the 3'-5' direction.. It catalyses the reaction ATP + H2O = ADP + phosphate + H(+). Functionally, the heterodimer acts as both an ATP-dependent DNA helicase and an ATP-dependent, dual-direction single-stranded exonuclease. Recognizes the chi site generating a DNA molecule suitable for the initiation of homologous recombination. The AddA nuclease domain is required for chi fragment generation; this subunit has the helicase and 3' -&gt; 5' nuclease activities. The sequence is that of ATP-dependent helicase/nuclease subunit A from Clostridium botulinum (strain Okra / Type B1).